A 458-amino-acid chain; its full sequence is MDYLPLFFDLKAKPCLIVGGGTIATRKARLLHKAGAKLHVVAPKVSEELEKLVAASNGKVFKQEYDQTFLDDVILVISATDIDAVNSVVAADCHAIKLPVNVVDSPALCSVIMPAIIDRSPLIIGVTSGGEAPVLARRVRSMLESSIPAAYGQLAQLASKFRQRAKDVFENGDLRRRFWENILNGPIAEKVLGGNLAAAEQLIEAQLDSASVEKTGEVYLVGAGPGDPDLLTFKALRLMQQAEVVLYDRLVSEPILEMTRRDAERIYVGKKRAEHAVPQQKINQMLLELAQQGKRVLRLKGGDPFIFGRGGEEIDLLAEHKIPFQVVPGITAASGCASYSGIPLTHRDYSQSVRFITGHLQEGKENFRWSEFVDKQQTLVFYMGLAGLETICSKLIEYGKSPSTPAALIERGTLPEQRVHVSDLAGLAAKIEGLDVHAPTLLIIGDVVRCHEKLNWYK.

Residues 1 to 203 (MDYLPLFFDL…GNLAAAEQLI (203 aa)) form a precorrin-2 dehydrogenase /sirohydrochlorin ferrochelatase region. NAD(+) is bound by residues 22-23 (TI) and 43-44 (PK). Ser128 is modified (phosphoserine). The segment at 216 to 458 (GEVYLVGAGP…RCHEKLNWYK (243 aa)) is uroporphyrinogen-III C-methyltransferase. Pro225 lines the S-adenosyl-L-methionine pocket. Asp248 (proton acceptor) is an active-site residue. Lys270 serves as the catalytic Proton donor. Residues 301–303 (GGD), Ile306, 331–332 (TA), Met383, and Gly412 contribute to the S-adenosyl-L-methionine site.

The protein in the N-terminal section; belongs to the precorrin-2 dehydrogenase / sirohydrochlorin ferrochelatase family. In the C-terminal section; belongs to the precorrin methyltransferase family.

The catalysed reaction is uroporphyrinogen III + 2 S-adenosyl-L-methionine = precorrin-2 + 2 S-adenosyl-L-homocysteine + H(+). It catalyses the reaction precorrin-2 + NAD(+) = sirohydrochlorin + NADH + 2 H(+). The enzyme catalyses siroheme + 2 H(+) = sirohydrochlorin + Fe(2+). It participates in cofactor biosynthesis; adenosylcobalamin biosynthesis; precorrin-2 from uroporphyrinogen III: step 1/1. It functions in the pathway cofactor biosynthesis; adenosylcobalamin biosynthesis; sirohydrochlorin from precorrin-2: step 1/1. The protein operates within porphyrin-containing compound metabolism; siroheme biosynthesis; precorrin-2 from uroporphyrinogen III: step 1/1. Its pathway is porphyrin-containing compound metabolism; siroheme biosynthesis; siroheme from sirohydrochlorin: step 1/1. It participates in porphyrin-containing compound metabolism; siroheme biosynthesis; sirohydrochlorin from precorrin-2: step 1/1. In terms of biological role, multifunctional enzyme that catalyzes the SAM-dependent methylations of uroporphyrinogen III at position C-2 and C-7 to form precorrin-2 via precorrin-1. Then it catalyzes the NAD-dependent ring dehydrogenation of precorrin-2 to yield sirohydrochlorin. Finally, it catalyzes the ferrochelation of sirohydrochlorin to yield siroheme. The sequence is that of Siroheme synthase from Saccharophagus degradans (strain 2-40 / ATCC 43961 / DSM 17024).